We begin with the raw amino-acid sequence, 173 residues long: Adenine phosphoribosyltransferase (173 aa).

The protein belongs to the purine/pyrimidine phosphoribosyltransferase family. In terms of assembly, homodimer.

It localises to the cytoplasm. It catalyses the reaction AMP + diphosphate = 5-phospho-alpha-D-ribose 1-diphosphate + adenine. The protein operates within purine metabolism; AMP biosynthesis via salvage pathway; AMP from adenine: step 1/1. In terms of biological role, catalyzes a salvage reaction resulting in the formation of AMP, that is energically less costly than de novo synthesis. The chain is Adenine phosphoribosyltransferase from Desulfitobacterium hafniense (strain Y51).